Reading from the N-terminus, the 507-residue chain is Chromosomal replication initiator protein DnaA (507 aa).

The domain I, interacts with DnaA modulators stretch occupies residues M1 to R87. Low complexity predominate over residues A85–S110. Residues A85–R158 are disordered. Residues R87–S170 are domain II. Residues Q126–F140 show a composition bias toward basic and acidic residues. Residues Y171 to S387 form a domain III, AAA+ region region. ATP contacts are provided by G215, G217, K218, and T219. The tract at residues H388–T507 is domain IV, binds dsDNA.

This sequence belongs to the DnaA family. As to quaternary structure, oligomerizes as a right-handed, spiral filament on DNA at oriC.

It localises to the cytoplasm. In terms of biological role, plays an essential role in the initiation and regulation of chromosomal replication. ATP-DnaA binds to the origin of replication (oriC) to initiate formation of the DNA replication initiation complex once per cell cycle. Binds the DnaA box (a 9 base pair repeat at the origin) and separates the double-stranded (ds)DNA. Forms a right-handed helical filament on oriC DNA; dsDNA binds to the exterior of the filament while single-stranded (ss)DNA is stabiized in the filament's interior. The ATP-DnaA-oriC complex binds and stabilizes one strand of the AT-rich DNA unwinding element (DUE), permitting loading of DNA polymerase. After initiation quickly degrades to an ADP-DnaA complex that is not apt for DNA replication. Binds acidic phospholipids. The protein is Chromosomal replication initiator protein DnaA of Pseudomonas fluorescens (strain Pf0-1).